The chain runs to 212 residues: Probable plastid-lipid-associated protein 11, chloroplastic (212 aa).

Residues 1–25 (MALALSLSACSPPLRRTRRAGFRTS) constitute a chloroplast transit peptide.

Belongs to the PAP/fibrillin family.

The protein localises to the plastid. It localises to the chloroplast thylakoid. The protein is Probable plastid-lipid-associated protein 11, chloroplastic (PAP11) of Arabidopsis thaliana (Mouse-ear cress).